The primary structure comprises 246 residues: Fasciclin-like arabinogalactan protein 11 (246 aa).

A signal peptide spans 1–24 (MATSRTFIFSNLFIFFLVIATTYG). Residues 34–179 (PTNITAILEK…LAVYQVDQVL (146 aa)) form the FAS1 domain. N-linked (GlcNAc...) asparagine glycans are attached at residues Asn36, Asn68, Asn141, and Asn150. Residues 193–222 (PAPEKGGSVSKGSASGGDDGGDSTDSSDAE) form a disordered region. Ser219 carries the GPI-anchor amidated serine lipid modification. A propeptide spans 220-246 (DAERTGFGFGIRITTVAAIAASSSLWI) (removed in mature form).

This sequence belongs to the fasciclin-like AGP family. As to expression, expressed in the sclerenchyma cells of inflorescence stems and siliques.

It localises to the cell membrane. May be a cell surface adhesion protein. This is Fasciclin-like arabinogalactan protein 11 (FLA11) from Arabidopsis thaliana (Mouse-ear cress).